A 254-amino-acid polypeptide reads, in one-letter code: NAD kinase (254 aa).

Residue aspartate 44 is the Proton acceptor of the active site. NAD(+) is bound by residues 44-45, 114-115, aspartate 144, alanine 152, 155-160, and alanine 179; these read DG, NE, and TAYNYS.

This sequence belongs to the NAD kinase family. A divalent metal cation serves as cofactor.

The protein resides in the cytoplasm. It carries out the reaction NAD(+) + ATP = ADP + NADP(+) + H(+). Involved in the regulation of the intracellular balance of NAD and NADP, and is a key enzyme in the biosynthesis of NADP. Catalyzes specifically the phosphorylation on 2'-hydroxyl of the adenosine moiety of NAD to yield NADP. This is NAD kinase from Cereibacter sphaeroides (strain ATCC 17023 / DSM 158 / JCM 6121 / CCUG 31486 / LMG 2827 / NBRC 12203 / NCIMB 8253 / ATH 2.4.1.) (Rhodobacter sphaeroides).